The following is an 864-amino-acid chain: Leucine--tRNA ligase (864 aa).

A 'HIGH' region motif is present at residues 42–52; sequence PYPSGKLHMGH. The 'KMSKS' region signature appears at 624 to 628; the sequence is KMSKS. Lysine 627 is a binding site for ATP.

Belongs to the class-I aminoacyl-tRNA synthetase family.

The protein resides in the cytoplasm. It catalyses the reaction tRNA(Leu) + L-leucine + ATP = L-leucyl-tRNA(Leu) + AMP + diphosphate. The polypeptide is Leucine--tRNA ligase (Burkholderia mallei (strain ATCC 23344)).